The sequence spans 821 residues: PX domain-containing protein C1450.12 (821 aa).

The 140-residue stretch at 171–310 (AYVLGVRQST…SFLTDDPVTL (140 aa)) folds into the PX domain. Residues 235 to 271 (KDDHDTYLNSSEDSTLSPLPSRSSDTNDPQSDSQHVL) form a disordered region. Positions 241-268 (YLNSSEDSTLSPLPSRSSDTNDPQSDSQ) are enriched in polar residues. Phosphothreonine occurs at positions 260 and 597. 2 stretches are compositionally biased toward acidic residues: residues 737–746 (GDEDDQDEND) and 754–766 (EHME…EEFD). Residues 737-766 (GDEDDQDENDQVTKVEEEHMEDDDSVEEFD) form a disordered region. Residue S761 is modified to Phosphoserine.

It is found in the mitochondrion membrane. This Schizosaccharomyces pombe (strain 972 / ATCC 24843) (Fission yeast) protein is PX domain-containing protein C1450.12.